Here is a 376-residue protein sequence, read N- to C-terminus: Erythronate-4-phosphate dehydrogenase (376 aa).

Serine 45 and threonine 66 together coordinate substrate. Residues glutamine 126–valine 127, aspartate 146, threonine 174, alanine 201–arginine 203, and aspartate 227 each bind NAD(+). Residue arginine 203 is part of the active site. The active site involves glutamate 232. The active-site Proton donor is histidine 249. Residue glycine 252 participates in NAD(+) binding. Tyrosine 253 is a binding site for substrate.

This sequence belongs to the D-isomer specific 2-hydroxyacid dehydrogenase family. PdxB subfamily. In terms of assembly, homodimer.

It is found in the cytoplasm. It catalyses the reaction 4-phospho-D-erythronate + NAD(+) = (R)-3-hydroxy-2-oxo-4-phosphooxybutanoate + NADH + H(+). It participates in cofactor biosynthesis; pyridoxine 5'-phosphate biosynthesis; pyridoxine 5'-phosphate from D-erythrose 4-phosphate: step 2/5. Its function is as follows. Catalyzes the oxidation of erythronate-4-phosphate to 3-hydroxy-2-oxo-4-phosphonooxybutanoate. This is Erythronate-4-phosphate dehydrogenase from Ectopseudomonas mendocina (strain ymp) (Pseudomonas mendocina).